A 410-amino-acid chain; its full sequence is Protein LTV1 homolog (410 aa).

Disordered regions lie at residues 142–165 (VYRS…DEMY) and 325–378 (EMDI…ARKL). 2 stretches are compositionally biased toward acidic residues: residues 151–165 (DSEE…DEMY) and 325–345 (EMDI…DDDK). Basic and acidic residues predominate over residues 357–366 (PKNETPEQRS). Residues 363–389 (EQRSLRKKAVKEARKLRRVEKKANKTM) are a coiled coil. Over residues 367–378 (LRKKAVKEARKL) the composition is skewed to basic residues.

It belongs to the LTV1 family.

This is Protein LTV1 homolog from Caenorhabditis elegans.